Reading from the N-terminus, the 556-residue chain is Formate--tetrahydrofolate ligase (556 aa).

Residue 65–72 (TPAGEGKS) participates in ATP binding.

Belongs to the formate--tetrahydrofolate ligase family.

It catalyses the reaction (6S)-5,6,7,8-tetrahydrofolate + formate + ATP = (6R)-10-formyltetrahydrofolate + ADP + phosphate. Its pathway is one-carbon metabolism; tetrahydrofolate interconversion. The sequence is that of Formate--tetrahydrofolate ligase from Streptococcus pneumoniae (strain Hungary19A-6).